The primary structure comprises 24 residues: Prokineticin 1-like protein (24 aa).

Residues cysteine 7 and cysteine 19 are joined by a disulfide bond.

Expressed by the skin glands.

It localises to the secreted. Its function is as follows. Stimulates insulin secretion by BRIN-BD11 cells in vitro. This Pelophylax saharicus (Sahara frog) protein is Prokineticin 1-like protein.